The sequence spans 317 residues: Sulfate adenylyltransferase subunit 2 (317 aa).

2 disordered regions span residues 1–21 and 298–317; these read MPDS…APLD and RAID…EGYF.

The protein belongs to the PAPS reductase family. CysD subfamily. In terms of assembly, heterodimer composed of CysD, the smaller subunit, and CysN.

It catalyses the reaction sulfate + ATP + H(+) = adenosine 5'-phosphosulfate + diphosphate. It participates in sulfur metabolism; hydrogen sulfide biosynthesis; sulfite from sulfate: step 1/3. Its function is as follows. With CysN forms the ATP sulfurylase (ATPS) that catalyzes the adenylation of sulfate producing adenosine 5'-phosphosulfate (APS) and diphosphate, the first enzymatic step in sulfur assimilation pathway. APS synthesis involves the formation of a high-energy phosphoric-sulfuric acid anhydride bond driven by GTP hydrolysis by CysN coupled to ATP hydrolysis by CysD. In Rhizobium etli (strain ATCC 51251 / DSM 11541 / JCM 21823 / NBRC 15573 / CFN 42), this protein is Sulfate adenylyltransferase subunit 2.